Here is a 210-residue protein sequence, read N- to C-terminus: Large ribosomal subunit protein bL25 (210 aa).

The segment at 179 to 210 (LPPQQEEEIHSGEQQEPGQPEAEEGRETTPEG) is disordered. Basic and acidic residues predominate over residues 201-210 (EEGRETTPEG).

This sequence belongs to the bacterial ribosomal protein bL25 family. CTC subfamily. Part of the 50S ribosomal subunit; part of the 5S rRNA/L5/L18/L25 subcomplex. Contacts the 5S rRNA. Binds to the 5S rRNA independently of L5 and L18.

In terms of biological role, this is one of the proteins that binds to the 5S RNA in the ribosome where it forms part of the central protuberance. In Geobacillus thermodenitrificans (strain NG80-2), this protein is Large ribosomal subunit protein bL25.